The following is a 263-amino-acid chain: Phosphatidylglycerol--prolipoprotein diacylglyceryl transferase (263 aa).

Transmembrane regions (helical) follow at residues 6–26 (VIFS…VLGI), 50–70 (LLTA…VLIY), 85–105 (TWEG…AVII), and 112–132 (IPTF…LFLG). Arg-133 lines the a 1,2-diacyl-sn-glycero-3-phospho-(1'-sn-glycerol) pocket. The next 3 membrane-spanning stretches (helical) occupy residues 169 to 189 (LYEA…LFFL), 197 to 217 (GALT…VEFF), and 233 to 253 (MGQL…LGAL).

Belongs to the Lgt family.

It is found in the cell membrane. The enzyme catalyses L-cysteinyl-[prolipoprotein] + a 1,2-diacyl-sn-glycero-3-phospho-(1'-sn-glycerol) = an S-1,2-diacyl-sn-glyceryl-L-cysteinyl-[prolipoprotein] + sn-glycerol 1-phosphate + H(+). The protein operates within protein modification; lipoprotein biosynthesis (diacylglyceryl transfer). In terms of biological role, catalyzes the transfer of the diacylglyceryl group from phosphatidylglycerol to the sulfhydryl group of the N-terminal cysteine of a prolipoprotein, the first step in the formation of mature lipoproteins. The chain is Phosphatidylglycerol--prolipoprotein diacylglyceryl transferase from Wolbachia pipientis wMel.